The primary structure comprises 292 residues: NAD kinase (292 aa).

The active-site Proton acceptor is the D73. Residues 73–74 (DG), 147–148 (NE), H158, R175, D177, 188–193 (TAYSLS), and Q247 contribute to the NAD(+) site.

Belongs to the NAD kinase family. The cofactor is a divalent metal cation.

It localises to the cytoplasm. The enzyme catalyses NAD(+) + ATP = ADP + NADP(+) + H(+). Its function is as follows. Involved in the regulation of the intracellular balance of NAD and NADP, and is a key enzyme in the biosynthesis of NADP. Catalyzes specifically the phosphorylation on 2'-hydroxyl of the adenosine moiety of NAD to yield NADP. In Shigella boydii serotype 18 (strain CDC 3083-94 / BS512), this protein is NAD kinase.